A 163-amino-acid polypeptide reads, in one-letter code: Ribosome maturation factor RimM (163 aa).

The region spanning 90–161 (EGRHYWGDLE…VVVDPPEGLL (72 aa)) is the PRC barrel domain.

The protein belongs to the RimM family. In terms of assembly, binds ribosomal protein uS19.

It is found in the cytoplasm. In terms of biological role, an accessory protein needed during the final step in the assembly of 30S ribosomal subunit, possibly for assembly of the head region. Essential for efficient processing of 16S rRNA. May be needed both before and after RbfA during the maturation of 16S rRNA. It has affinity for free ribosomal 30S subunits but not for 70S ribosomes. The chain is Ribosome maturation factor RimM from Anaeromyxobacter dehalogenans (strain 2CP-C).